A 63-amino-acid chain; its full sequence is Large ribosomal subunit protein uL29 (63 aa).

It belongs to the universal ribosomal protein uL29 family.

This Alteromonas mediterranea (strain DSM 17117 / CIP 110805 / LMG 28347 / Deep ecotype) protein is Large ribosomal subunit protein uL29.